The primary structure comprises 540 residues: MKEHQCRGGRASPAAPATWLARISVSRGASAIAWTFMLGATAIPVAAQTDDPKLVRHTQSGAVEGVEGDVETFLGIPFAAPPVGDLRWRPPAPPRAWAGTRDGRRFAPDCIGNERLREGSRAAGTSEDCLYLNIWSPKQVGKGGLPVMIWVYGGGFSGGSGAVPYYDGSALAQKGVVVVTFNYRAGILGFLAHPALSKESPNGVSGNYGLLDMLAAFKWVQNNIREFGGDPNRVTVFGESAGASALGLLLTSPLSESAFNQAILQSPGLARPLATLSESEANGLELGADISALRRADAGELTKIAQSRIPMSRQFTKPRPMGPILDGYVLRTLDVDAFAKGAFRKIPVLVGGNADEGRAFTDRLPVKTVLEYRAYLTEQFGDEADAWERCYPANSDADVPAAVARLFGDSQFNNGIELLSAAFAKWRTPLWRYRFTGIPGAGRRPATHGDEIPYVFANLGPSSVSMFGSLEGGAGASDIKLATEMSAAWVSFAVHGVPDQGTKSHWPRFERRGEIMTFGSQVGSGEGLGVSPSKACQPSK.

S240 serves as the catalytic Acyl-ester intermediate. Residues E356 and H448 each act as charge relay system in the active site. A disordered region spans residues 521–540 (QVGSGEGLGVSPSKACQPSK).

The protein belongs to the type-B carboxylesterase/lipase family.

It carries out the reaction fumonisin B1 + 2 H2O = 2 tricarballylate + (2S,3S,5R,10R,12S,14S,15R,16R)-2-amino-12,16-dimethylicosane-3,5,10,14,15-pentol + 2 H(+). Its function is as follows. Involved in degradation of fumonisin B1. Catalyzes the hydrolysis of fumonisin B1 (FB1) to aminopentol (HFB1). This is Fumonisin B1 esterase (fumD) from Sphingopyxis macrogoltabida (Sphingomonas macrogoltabidus).